The following is a 130-amino-acid chain: Small ribosomal subunit protein uS8 (130 aa).

It belongs to the universal ribosomal protein uS8 family.

In Kluyveromyces marxianus (Yeast), this protein is Small ribosomal subunit protein uS8 (RPS22).